The following is an 88-amino-acid chain: Small ribosomal subunit protein uS17 (88 aa).

Belongs to the universal ribosomal protein uS17 family. Part of the 30S ribosomal subunit.

Its function is as follows. One of the primary rRNA binding proteins, it binds specifically to the 5'-end of 16S ribosomal RNA. This is Small ribosomal subunit protein uS17 from Prochlorococcus marinus (strain NATL1A).